The sequence spans 211 residues: MHLFHLCLIILCSCPTVQASKLCLGWLLGMDIDPYKEFGATVELLSFLPADFFPSVRDLLDTASALYREALESSDHCSPHHTALRQTVLCWGELMSLASWVGTNLEDPAARELVVSYVNDNMGLKVRQLLWFHISCLTFGRETVLEYLVSFWVWIRTPPAYRPPNAPILSTLPETTVVRRRRPSGRRTPSPRRRRSQSPRRRRSQSPASSC.

The signal sequence occupies residues 1–19 (MHLFHLCLIILCSCPTVQA). Residues 25 to 27 (GWL) are HBEAG. Residues 165–211 (NAPILSTLPETTVVRRRRPSGRRTPSPRRRRSQSPRRRRSQSPASSC) are disordered. Basic residues predominate over residues 178–204 (VRRRRPSGRRTPSPRRRRSQSPRRRRS). Residues 183-189 (PSGRRTP) form a 1; half-length repeat. The segment at 183–205 (PSGRRTPSPRRRRSQSPRRRRSQ) is 3 X 8 AA repeats of S-P-R-R-R-R-S-Q. The propeptide occupies 183–211 (PSGRRTPSPRRRRSQSPRRRRSQSPASSC). Tandem repeats lie at residues 190–197 (SPRRRRSQ) and 198–205 (SPRRRRSQ).

The protein belongs to the orthohepadnavirus precore antigen family. As to quaternary structure, homodimerizes. Post-translationally, phosphorylated. In terms of processing, cleaved by host furin.

It localises to the secreted. The protein resides in the host nucleus. May regulate immune response to the intracellular capsid in acting as a T-cell tolerogen, by having an immunoregulatory effect which prevents destruction of infected cells by cytotoxic T-cells. This immune regulation may predispose to chronicity during perinatal infections and prevent severe liver injury during adult infections. The chain is External core antigen from Woolly monkey hepatitis B virus (isolate Louisville) (WMHBV).